A 238-amino-acid polypeptide reads, in one-letter code: tRNA1(Val) (adenine(37)-N6)-methyltransferase (238 aa).

It belongs to the methyltransferase superfamily. tRNA (adenine-N(6)-)-methyltransferase family.

Its subcellular location is the cytoplasm. It carries out the reaction adenosine(37) in tRNA1(Val) + S-adenosyl-L-methionine = N(6)-methyladenosine(37) in tRNA1(Val) + S-adenosyl-L-homocysteine + H(+). Its function is as follows. Specifically methylates the adenine in position 37 of tRNA(1)(Val) (anticodon cmo5UAC). This chain is tRNA1(Val) (adenine(37)-N6)-methyltransferase, found in Shewanella baltica (strain OS185).